The following is a 296-amino-acid chain: DNA primase small subunit PriS (296 aa).

Residues D82, D84, and D191 contribute to the active site.

It belongs to the eukaryotic-type primase small subunit family. As to quaternary structure, heterodimer of a small subunit (PriS) and a large subunit (PriL). It depends on Mg(2+) as a cofactor. Mn(2+) is required as a cofactor.

Functionally, catalytic subunit of DNA primase, an RNA polymerase that catalyzes the synthesis of short RNA molecules used as primers for DNA polymerase during DNA replication. The small subunit contains the primase catalytic core and has DNA synthesis activity on its own. Binding to the large subunit stabilizes and modulates the activity, increasing the rate of DNA synthesis while decreasing the length of the DNA fragments, and conferring RNA synthesis capability. The DNA polymerase activity may enable DNA primase to also catalyze primer extension after primer synthesis. May also play a role in DNA repair. The polypeptide is DNA primase small subunit PriS (Methanopyrus kandleri (strain AV19 / DSM 6324 / JCM 9639 / NBRC 100938)).